The primary structure comprises 361 residues: Histidinol-phosphate aminotransferase (361 aa).

Lys219 carries the N6-(pyridoxal phosphate)lysine modification.

Belongs to the class-II pyridoxal-phosphate-dependent aminotransferase family. Histidinol-phosphate aminotransferase subfamily. Homodimer. It depends on pyridoxal 5'-phosphate as a cofactor.

It carries out the reaction L-histidinol phosphate + 2-oxoglutarate = 3-(imidazol-4-yl)-2-oxopropyl phosphate + L-glutamate. It functions in the pathway amino-acid biosynthesis; L-histidine biosynthesis; L-histidine from 5-phospho-alpha-D-ribose 1-diphosphate: step 7/9. The sequence is that of Histidinol-phosphate aminotransferase from Acinetobacter baumannii (strain ACICU).